Reading from the N-terminus, the 130-residue chain is Small ribosomal subunit protein uS9 (130 aa).

A disordered region spans residues 98-130 (LKRAGLLTRDPRMKERKKPGLKKARRSPQFSKR). The segment covering 111-130 (KERKKPGLKKARRSPQFSKR) has biased composition (basic residues).

Belongs to the universal ribosomal protein uS9 family.

The chain is Small ribosomal subunit protein uS9 from Staphylococcus haemolyticus (strain JCSC1435).